A 470-amino-acid polypeptide reads, in one-letter code: Glutamate--tRNA ligase (470 aa).

The 'HIGH' region signature appears at 9 to 19 (PSPTGFLHVGG). Residues 236 to 240 (RLSKR) carry the 'KMSKS' region motif. K239 serves as a coordination point for ATP.

The protein belongs to the class-I aminoacyl-tRNA synthetase family. Glutamate--tRNA ligase type 1 subfamily. Monomer.

It is found in the cytoplasm. It carries out the reaction tRNA(Glu) + L-glutamate + ATP = L-glutamyl-tRNA(Glu) + AMP + diphosphate. In terms of biological role, catalyzes the attachment of glutamate to tRNA(Glu) in a two-step reaction: glutamate is first activated by ATP to form Glu-AMP and then transferred to the acceptor end of tRNA(Glu). This Legionella pneumophila (strain Paris) protein is Glutamate--tRNA ligase.